A 95-amino-acid polypeptide reads, in one-letter code: Co-chaperonin GroES (95 aa).

It belongs to the GroES chaperonin family. In terms of assembly, heptamer of 7 subunits arranged in a ring. Interacts with the chaperonin GroEL.

The protein resides in the cytoplasm. In terms of biological role, together with the chaperonin GroEL, plays an essential role in assisting protein folding. The GroEL-GroES system forms a nano-cage that allows encapsulation of the non-native substrate proteins and provides a physical environment optimized to promote and accelerate protein folding. GroES binds to the apical surface of the GroEL ring, thereby capping the opening of the GroEL channel. The sequence is that of Co-chaperonin GroES from Stenotrophomonas maltophilia (strain R551-3).